We begin with the raw amino-acid sequence, 114 residues long: Protein ORF3 (114 aa).

The segment at 1–28 is membrane association; it reads MGSRPCALGLFCCCSSCFCLCCPRHRPV. Hydrophobic regions lie at residues 6–22 and 33–53; these read CALG…CLCC and AAVG…GLIL. The interval 6-22 is induction of host SIRPA expression; the sequence is CALGLFCCCSSCFCLCC. The interval 28 to 68 is interaction with host HPX; that stretch reads VSRLAAAVGGAAAVPAVVSGVTGLILSPSQSPIFIQPTPSP. The interaction with the capsid protein stretch occupies residues 48-72; it reads VTGLILSPSQSPIFIQPTPSPPMSP. A Phosphoserine; by host modification is found at Ser71. Residues 72–114 form a homodimerization, and interaction with host AMBP/bikunin region; sequence PLRPGLDLVFANPPDHSAPLGVTRPSAPPLPHVVDLPQLGPRR. The disordered stretch occupies residues 91 to 114; that stretch reads LGVTRPSAPPLPHVVDLPQLGPRR. An interaction with host SRC, HCK, FYN, PIK3R3 and GRB2 region spans residues 95–104; that stretch reads RPSAPPLPHV. Residues 96–99 carry the PTAP/PSAP motif motif; that stretch reads PSAP.

It belongs to the hepevirus ORF3 protein family. Forms homooligomers. Interacts with host SRC, HCK, FYN, PIK3R3 and GRB2 (via SH3 domain); binding does not activate the kinases. Interacts with host AMBP/bikunin and AMBP/alpha-1-microglobulin peptides. Interacts with host HPX/hemopexin. Interacts (when phosphorylated) with capsid protein ORF2. Interacts with host TSG101; this interaction plays a role in viral release from the host cell. Interacts with host SIRPA; this interaction down-regulates the phosphorylation of host IRF3. Palmitoylated in the N-terminus.

Its subcellular location is the host endoplasmic reticulum membrane. The protein resides in the host cytoplasm. The protein localises to the host cytoskeleton. It localises to the virion. It is found in the host cell membrane. Functionally, small multifunctional phosphoprotein involved in virion morphogenesis, egress and counteracting host innate immunity. Plays critical roles in the final steps of viral release by interacting with host TSG101, a member of the vacuolar protein-sorting pathway and using other cellular host proteins involved in vesicle formation pathway. Also acts as a viroporin and forms ion conductive pores allowing viral particle release. Impairs the generation of type I interferon by down-regulating host TLR3 and TLR7 as well as their downstream signaling pathways. Down-regulates the phosphorylation of host IRF3 via the interaction with host SIRP-alpha, thereby inhibiting IFN-I expression. Interacts with host microtubules. The protein is Protein ORF3 of Hepatitis E virus genotype 1 (isolate Human/China/HeBei/1987) (HEV).